A 528-amino-acid chain; its full sequence is Membrane protein insertase YidC (528 aa).

Transmembrane regions (helical) follow at residues 13–33, 336–356, 406–426, 446–466, and 481–501; these read ILLA…FFIP, WGWA…PLTY, LPIL…LNAI, YFIL…ITPM, and PVIF…YWFV.

This sequence belongs to the OXA1/ALB3/YidC family. Type 1 subfamily. As to quaternary structure, interacts with the Sec translocase complex via SecD. Specifically interacts with transmembrane segments of nascent integral membrane proteins during membrane integration.

The protein resides in the cell inner membrane. Functionally, required for the insertion and/or proper folding and/or complex formation of integral membrane proteins into the membrane. Involved in integration of membrane proteins that insert both dependently and independently of the Sec translocase complex, as well as at least some lipoproteins. Aids folding of multispanning membrane proteins. The protein is Membrane protein insertase YidC of Campylobacter jejuni subsp. jejuni serotype O:2 (strain ATCC 700819 / NCTC 11168).